Here is a 321-residue protein sequence, read N- to C-terminus: GTP 3',8-cyclase (321 aa).

Residues 5–233 (SFNRVIDYIR…QGSSKIYTLE (229 aa)) enclose the Radical SAM core domain. Arginine 14 lines the GTP pocket. Positions 21 and 25 each coordinate [4Fe-4S] cluster. Tyrosine 27 serves as a coordination point for S-adenosyl-L-methionine. Residue cysteine 28 coordinates [4Fe-4S] cluster. A GTP-binding site is contributed by arginine 64. An S-adenosyl-L-methionine-binding site is contributed by glycine 68. Serine 95 lines the GTP pocket. Serine 119 contacts S-adenosyl-L-methionine. Residue lysine 155 coordinates GTP. Methionine 189 serves as a coordination point for S-adenosyl-L-methionine. [4Fe-4S] cluster is bound by residues cysteine 249 and cysteine 252. 254–256 (RIR) provides a ligand contact to GTP. Cysteine 266 is a [4Fe-4S] cluster binding site.

Belongs to the radical SAM superfamily. MoaA family. Monomer and homodimer. [4Fe-4S] cluster serves as cofactor.

It carries out the reaction GTP + AH2 + S-adenosyl-L-methionine = (8S)-3',8-cyclo-7,8-dihydroguanosine 5'-triphosphate + 5'-deoxyadenosine + L-methionine + A + H(+). Its pathway is cofactor biosynthesis; molybdopterin biosynthesis. Functionally, catalyzes the cyclization of GTP to (8S)-3',8-cyclo-7,8-dihydroguanosine 5'-triphosphate. The chain is GTP 3',8-cyclase from Helicobacter pylori (strain J99 / ATCC 700824) (Campylobacter pylori J99).